Consider the following 574-residue polypeptide: ESX-1 secretion system protein EccA1 (574 aa).

335 to 342 (GPPGTGKT) is a binding site for ATP.

Belongs to the CbxX/CfxQ family. Part of the ESX-1 / type VII secretion system (T7SS), which is composed of cytosolic and membrane components.

It is found in the cytoplasm. Its function is as follows. Part of the ESX-1 / type VII specialized secretion system (T7SS), which exports several proteins including EsxA and EsxB. Plays a role in DNA conjugation, in both donor and recipient strains. EccA1 exhibits ATPase activity and may provide energy for the export of ESX-1 substrates. The sequence is that of ESX-1 secretion system protein EccA1 from Mycolicibacterium smegmatis (strain ATCC 700084 / mc(2)155) (Mycobacterium smegmatis).